Consider the following 491-residue polypeptide: MAKQDSQTEGISIDSDLINFLNASPTAFHAIDEAKKRLKHSGYVQVSERDDWKLELGKRYFFTRNHSTIVAFAIGKKYVAGNGFYVVGAHTDSPCIKLKPVSKVTKSGYLEVGVQPYGGGLWHTWFDRDLAVAGRVIVREEKHGSVSYSHRLVRIEEPIMRVPTLAIHLDRNVNTDGFKVNTQSHLLPVLATSVKAELSKVVAENGTVGNDEETDGMKSSKGTTNANSKHHSLLLQMIAGQIGCNGSDICDFELQACDTQPSVIAGAAKEFIFSGRLDNLCMSFCSLKALIDATASDSHLENESGVRMVALFDHEEVGSDSAQGAGSPVMFDALSRITSTFNSDSKLLRKAIQKSFLVSADMAHALHPNYADKHEENHQPRMHGGLVIKHNANQRYATNSVTSFLFKEIASKHNLPVQDFVVRNDMPCGSTIGPILASGVGIRTVDVGAPQLSMHSIREMCAVDDVKYSYEHFKAFFEDFSHLDSKITVDM.

His90 is a Zn(2+) binding site. His168 contacts substrate. Position 278 (Asp278) interacts with Zn(2+). Glu315 is a substrate binding site. Zn(2+)-binding residues include Glu316 and Asp361. Asp361, His364, Lys389, and Tyr396 together coordinate substrate. His455 lines the Zn(2+) pocket.

Belongs to the peptidase M18 family. As to quaternary structure, tetrahedron-shaped homododecamer built from six homodimers. Zn(2+) serves as cofactor.

The protein resides in the cytoplasm. The catalysed reaction is Release of an N-terminal aspartate or glutamate from a peptide, with a preference for aspartate.. Its function is as follows. Likely to play an important role in intracellular protein and peptide metabolism. The protein is Probable aspartyl aminopeptidase of Ricinus communis (Castor bean).